A 321-amino-acid polypeptide reads, in one-letter code: Annexin A5 (321 aa).

Annexin repeat units follow at residues 15–86, 87–158, 170–242, and 246–317; these read FDAR…SLMR, PARI…VLLQ, ALVE…AVVK, and SVPA…LLCG.

It belongs to the annexin family.

Its function is as follows. Collagen-binding protein. The chain is Annexin A5 (ANXA5) from Gallus gallus (Chicken).